The chain runs to 372 residues: O-glycoside alpha-1,2-mannosyltransferase homolog 2 (372 aa).

Residues 1 to 6 (MRISRL) lie on the Cytoplasmic side of the membrane. A helical; Signal-anchor for type II membrane protein membrane pass occupies residues 7 to 27 (LIRVLLGFVILFITYILFPSI). Residues 28–372 (PKALVNTLNV…NLTNEDYDEL (345 aa)) lie on the Lumenal side of the membrane. Glu-271 serves as the catalytic Nucleophile.

It belongs to the glycosyltransferase 15 family.

It is found in the endoplasmic reticulum membrane. Its function is as follows. Probable mannosyltransferase involved in O-glycosylation of cell wall and secreted proteins. The polypeptide is O-glycoside alpha-1,2-mannosyltransferase homolog 2 (omh2) (Schizosaccharomyces pombe (strain 972 / ATCC 24843) (Fission yeast)).